Reading from the N-terminus, the 144-residue chain is Superoxide dismutase [Mn], mitochondrial (144 aa).

The Mn(2+) site is built by H10, H58, and D143.

This sequence belongs to the iron/manganese superoxide dismutase family. In terms of assembly, homotetramer. Mn(2+) is required as a cofactor.

It localises to the mitochondrion matrix. The catalysed reaction is 2 superoxide + 2 H(+) = H2O2 + O2. In terms of biological role, destroys superoxide anion radicals which are normally produced within the cells and which are toxic to biological systems. The chain is Superoxide dismutase [Mn], mitochondrial from Branchiostoma floridae (Florida lancelet).